Here is a 419-residue protein sequence, read N- to C-terminus: Aminoacyltransferase FemB (419 aa).

The protein belongs to the FemABX family. Homodimer. Interacts with FemA.

The protein resides in the cytoplasm. It catalyses the reaction MurNAc-L-Ala-D-isoglutaminyl-L-Lys-(N(6)-tri-Gly)-D-Ala-D-Ala-diphospho-di-trans,octa-cis-undecaprenyl-GlcNAc + 2 glycyl-tRNA(Gly) = MurNAc-L-Ala-D-isoglutaminyl-L-Lys-(N(6)-penta-Gly)-D-Ala-D-Ala-diphospho-di-trans,octa-cis-undecaprenyl-GlcNAc + 2 tRNA(Gly) + 2 H(+). In terms of biological role, catalyzes the formation of the pentaglycine interpeptide bridge, which is characteristic of the S.aureus peptidoglycan. Adds glycines 4 and 5 of the pentaglycine bridge, using glycyl-tRNA(Gly) as donor. Involved in resistance to methicillin. The sequence is that of Aminoacyltransferase FemB (femB) from Staphylococcus aureus (strain MW2).